The primary structure comprises 405 residues: Prostaglandin E2 receptor EP1 subtype (405 aa).

The Extracellular segment spans residues 1 to 39 (MSPYGLNLSLVDEATTCVTPRVPNTSVVLPTGGNGTSPA). Asparagine 7, asparagine 24, and asparagine 34 each carry an N-linked (GlcNAc...) asparagine glycan. Residues 40–62 (LPIFSMTLGAVSNVLALALLAQV) form a helical membrane-spanning segment. Topologically, residues 63–80 (AGRLRRRRSTATFLLFVA) are cytoplasmic. A helical membrane pass occupies residues 81–99 (SLLAIDLAGHVIPGALVLR). Topologically, residues 100-113 (LYTAGRAPAGGACH) are extracellular. A disulfide bond links cysteine 112 and cysteine 190. Residues 114–135 (FLGGCMVFFGLCPLLLGCGMAV) form a helical membrane-spanning segment. Topologically, residues 136 to 157 (ERCVGVTQPLIHAARVSVARAR) are cytoplasmic. Residues 158–179 (LALALLAAMALAVALLPLVHVG) traverse the membrane as a helical segment. The Extracellular portion of the chain corresponds to 180–202 (HYELQYPGTWCFISLGPPGGWRQ). A helical membrane pass occupies residues 203–228 (ALLAGLFAGLGLAALLAALVCNTLSG). The Cytoplasmic segment spans residues 229–301 (LALLRARWRR…HAHDVEMVGQ (73 aa)). A helical membrane pass occupies residues 302-323 (LVGIMVVSCICWSPLLVLVVLA). Residues 324 to 337 (IGGWNSNSLQRPLF) lie on the Extracellular side of the membrane. A helical transmembrane segment spans residues 338-357 (LAVRLASWNQILDPWVYILL). Over 358–405 (RQAMLRQLLRLLPLRVSAKGGPTELSLTKSAWEASSLRSSRHSGFSHL) the chain is Cytoplasmic.

Belongs to the G-protein coupled receptor 1 family. Post-translationally, phosphorylated. As to expression, highly abundant in kidney and lung. Found in a lesser extent in spleen, colon, and thymus. Also expressed in uterine myometrium and endometrium.

It localises to the cell membrane. Receptor for prostaglandin E2 (PGE2). The activity of this receptor is mediated by G(q) proteins which activate a phosphatidylinositol-calcium second messenger system. May play a role as an important modulator of renal function. Implicated the smooth muscle contractile response to PGE2 in various tissues. Isoform 1 and isoform 2 have identical ligand binding properties, but isoform 2 lacks coupling to calcium mobilization and may therefore attenuate the action of PGE2 on tissues. The protein is Prostaglandin E2 receptor EP1 subtype (Ptger1) of Rattus norvegicus (Rat).